Reading from the N-terminus, the 127-residue chain is Thioredoxin (127 aa).

The Thioredoxin domain occupies 2 to 115 (SDGVKHINSA…LRAAAEKMGR (114 aa)). Residues cysteine 33 and cysteine 36 each act as nucleophile in the active site. A disulfide bond links cysteine 33 and cysteine 36.

It belongs to the thioredoxin family.

Participates in various redox reactions through the reversible oxidation of its active center dithiol to a disulfide and catalyzes dithiol-disulfide exchange reactions. This is Thioredoxin (trx) from Neurospora crassa (strain ATCC 24698 / 74-OR23-1A / CBS 708.71 / DSM 1257 / FGSC 987).